Reading from the N-terminus, the 195-residue chain is Large ribosomal subunit protein eL18 (195 aa).

Lysine 126 is covalently cross-linked (Glycyl lysine isopeptide (Lys-Gly) (interchain with G-Cter in SUMO2)). Serine 137 carries the phosphoserine modification. Residues 158 to 195 (HFGKAPGTPHSHTKPYVRSKGRKFERARGRRASRGYKN) are disordered. At threonine 165 the chain carries Phosphothreonine. 2 stretches are compositionally biased toward basic residues: residues 168 to 178 (SHTKPYVRSKG) and 185 to 195 (RGRRASRGYKN). A Glycyl lysine isopeptide (Lys-Gly) (interchain with G-Cter in SUMO2) cross-link involves residue lysine 171.

Belongs to the eukaryotic ribosomal protein eL18 family. As to quaternary structure, component of the large ribosomal subunit.

It is found in the cytoplasm. It localises to the cytosol. Its subcellular location is the rough endoplasmic reticulum. In terms of biological role, component of the large ribosomal subunit. In Sus scrofa (Pig), this protein is Large ribosomal subunit protein eL18 (RPL18).